The sequence spans 122 residues: Large ribosomal subunit protein uL14 (122 aa).

The protein belongs to the universal ribosomal protein uL14 family. As to quaternary structure, part of the 50S ribosomal subunit. Forms a cluster with proteins L3 and L19. In the 70S ribosome, L14 and L19 interact and together make contacts with the 16S rRNA in bridges B5 and B8.

Binds to 23S rRNA. Forms part of two intersubunit bridges in the 70S ribosome. This chain is Large ribosomal subunit protein uL14, found in Geobacter sulfurreducens (strain ATCC 51573 / DSM 12127 / PCA).